An 847-amino-acid polypeptide reads, in one-letter code: Zinc transporter ZIP10 (847 aa).

Residues 1 to 26 (MMRVHTHTRLCFLCVLTLLYHQCSHC) form the signal peptide. A disordered region spans residues 136–374 (GRHSHSAGHP…RREVPGSPAH (239 aa)). Over residues 162 to 171 (HHENEEHTLA) the composition is skewed to basic and acidic residues. Positions 179 to 188 (TLGTGATPPS) are enriched in polar residues. A compositionally biased stretch (basic and acidic residues) spans 190–269 (SEEHDHDHEH…QEHNDLSDQN (80 aa)). 2 stretches are compositionally biased toward basic residues: residues 270–285 (HHHH…HPHL) and 314–330 (TRRH…RGRN). Asn385 is a glycosylation site (N-linked (GlcNAc...) asparagine). 3 consecutive transmembrane segments (helical) span residues 447–467 (FVSI…VPIL), 474–494 (FLLT…ALLH), and 529–549 (GLTA…IGMF). The interval 613-676 (ELQPLDSPSK…HSHHGHCHSD (64 aa)) is disordered. Over residues 629 to 646 (DSDHPYEAPVKTEEDNVP) the composition is skewed to basic and acidic residues. The segment covering 648–672 (AKSKKHGHGHGHGHGHGHGHSHHGH) has biased composition (basic residues). The next 4 membrane-spanning stretches (helical) occupy residues 705-725 (AIGA…VAVF), 750-770 (IVYN…GTAV), 779-799 (SWIF…DMLP), and 817-837 (FVLQ…IAIF).

Belongs to the ZIP transporter (TC 2.A.5) family. In terms of processing, undergoes N-terminal ectodomain shedding.

It is found in the cell membrane. It localises to the apical cell membrane. It carries out the reaction Zn(2+)(in) = Zn(2+)(out). Its function is as follows. Zinc-influx transporter. When associated with slc39a6, the heterodimer slc39a10/slc39a6 has a functional role in epithelial-mesenchymal transition (EMT) during embryonic development. Slc39a10/slc39a6 heterodimers play also an essentiel role in initiating mitosis by importing zinc into cells to initiate a pathway resulting in the onset of mitosis. When associated with slc39a6, the heterodimer controls Ncam1 phosphorylation and integration into focal adhesion complexes during EMT. The sequence is that of Zinc transporter ZIP10 from Danio rerio (Zebrafish).